The following is a 424-amino-acid chain: UDP-N-acetylglucosamine 1-carboxyvinyltransferase (424 aa).

22–23 (KN) serves as a coordination point for phosphoenolpyruvate. Arg93 is a binding site for UDP-N-acetyl-alpha-D-glucosamine. Cys117 serves as the catalytic Proton donor. Cys117 is subject to 2-(S-cysteinyl)pyruvic acid O-phosphothioketal. Residues 122–126 (RPIDL), Asp307, and Val329 each bind UDP-N-acetyl-alpha-D-glucosamine.

It belongs to the EPSP synthase family. MurA subfamily.

The protein resides in the cytoplasm. It catalyses the reaction phosphoenolpyruvate + UDP-N-acetyl-alpha-D-glucosamine = UDP-N-acetyl-3-O-(1-carboxyvinyl)-alpha-D-glucosamine + phosphate. Its pathway is cell wall biogenesis; peptidoglycan biosynthesis. In terms of biological role, cell wall formation. Adds enolpyruvyl to UDP-N-acetylglucosamine. The chain is UDP-N-acetylglucosamine 1-carboxyvinyltransferase from Chlorobium luteolum (strain DSM 273 / BCRC 81028 / 2530) (Pelodictyon luteolum).